We begin with the raw amino-acid sequence, 434 residues long: Enolase (434 aa).

Glutamine 163 serves as a coordination point for (2R)-2-phosphoglycerate. The Proton donor role is filled by glutamate 205. Positions 242, 291, and 318 each coordinate Mg(2+). Lysine 343, arginine 372, serine 373, and lysine 394 together coordinate (2R)-2-phosphoglycerate. The active-site Proton acceptor is lysine 343.

Belongs to the enolase family. Requires Mg(2+) as cofactor.

Its subcellular location is the cytoplasm. The protein localises to the secreted. It localises to the cell surface. It carries out the reaction (2R)-2-phosphoglycerate = phosphoenolpyruvate + H2O. It participates in carbohydrate degradation; glycolysis; pyruvate from D-glyceraldehyde 3-phosphate: step 4/5. Functionally, catalyzes the reversible conversion of 2-phosphoglycerate (2-PG) into phosphoenolpyruvate (PEP). It is essential for the degradation of carbohydrates via glycolysis. The polypeptide is Enolase (Streptococcus thermophilus (strain CNRZ 1066)).